The chain runs to 72 residues: Conotoxin TxMMSK-04 (72 aa).

The N-terminal stretch at 1–20 (MMSKLGVLLTICLLLFPLTA) is a signal peptide. Positions 21 to 51 (VPLDGDQPADRPAERMQDGISSEHHPFFDSV) are excised as a propeptide. Glutamine 55 is modified (pyrrolidone carboxylic acid). Disulfide bonds link cysteine 57–cysteine 71, cysteine 58–cysteine 67, and cysteine 63–cysteine 70. At proline 69 the chain carries 4-hydroxyproline. Cysteine 71 is modified (cysteine amide).

The protein belongs to the conotoxin M superfamily. As to expression, expressed by the venom duct.

The protein resides in the secreted. This is Conotoxin TxMMSK-04 from Conus textile (Cloth-of-gold cone).